A 107-amino-acid chain; its full sequence is UPF0145 protein BVU_2335 (107 aa).

The protein belongs to the UPF0145 family.

The sequence is that of UPF0145 protein BVU_2335 from Phocaeicola vulgatus (strain ATCC 8482 / DSM 1447 / JCM 5826 / CCUG 4940 / NBRC 14291 / NCTC 11154) (Bacteroides vulgatus).